A 434-amino-acid chain; its full sequence is MIVRRALALAALALAASPALAAQERPTIVVGSPDFRPLPIAVAAFQGEGDAGVAATQTAEVVRADLVLSGLFDVLDPRGFLADPSEGFAAPSIRFARWADVGADGLAKARVRRGPAGLEGELHLYEVRAGREVLVKLLRVDGADARSLAHRMADEIVRYYTREPGIFATRIAAIRRGRGTWELVTQDMDGGNQQVLLSERSILMSPAWRPDGREILVTSYRSGRPELWAYRFSDRAFRPLGRHRNAFGGVYSPDGSRIAFTVSEGNVTDLWVMSADGVGARKLTSDPAIDVSPTWSPDGRRIAFVSDRSGTPQIYVMGADGSGARRLTFQGNYNQTPQWSPRGDLIAFTARDERKVFDVFVVSPDSGAINRITQDQGRTNEEPSWAPNGRLMIFRTDRNGGIQLVVSDARGDRQTPVTSGKTDLAAPAWGPLAP.

Residues 1 to 21 form the signal peptide; it reads MIVRRALALAALALAASPALA. Residues 411-434 are disordered; that stretch reads GDRQTPVTSGKTDLAAPAWGPLAP.

It belongs to the TolB family. The Tol-Pal system is composed of five core proteins: the inner membrane proteins TolA, TolQ and TolR, the periplasmic protein TolB and the outer membrane protein Pal. They form a network linking the inner and outer membranes and the peptidoglycan layer.

The protein localises to the periplasm. Its function is as follows. Part of the Tol-Pal system, which plays a role in outer membrane invagination during cell division and is important for maintaining outer membrane integrity. The chain is Tol-Pal system protein TolB from Anaeromyxobacter sp. (strain K).